We begin with the raw amino-acid sequence, 551 residues long: Trehalose-6-phosphate hydrolase (551 aa).

D200 (nucleophile) is an active-site residue. Catalysis depends on E251, which acts as the Proton donor.

Belongs to the glycosyl hydrolase 13 family.

The protein localises to the cytoplasm. The catalysed reaction is alpha,alpha-trehalose 6-phosphate + H2O = D-glucose 6-phosphate + D-glucose. Hydrolyzes trehalose-6-phosphate to glucose and glucose 6-phosphate. Can also very effectively hydrolyze p-nitrophenyl-alpha-D-glucopyranoside, but it does not recognize trehalose, sucrose, maltose, isomaltose, or maltodextrins. This Escherichia coli (strain K12) protein is Trehalose-6-phosphate hydrolase (treC).